Reading from the N-terminus, the 822-residue chain is Probable phosphoketolase (822 aa).

This sequence belongs to the XFP family. The cofactor is thiamine diphosphate.

The sequence is that of Probable phosphoketolase from Lactococcus lactis subsp. lactis (strain IL1403) (Streptococcus lactis).